A 206-amino-acid chain; its full sequence is Enterobactin synthase component D (206 aa).

Asp-107, Glu-109, and Glu-152 together coordinate Mg(2+).

This sequence belongs to the P-Pant transferase superfamily. EntD family. In terms of assembly, entB, EntD, EntE, and EntF form a multienzyme complex called enterobactin synthase. Mg(2+) serves as cofactor.

It is found in the membrane. It catalyses the reaction apo-[aryl-carrier protein] + CoA = holo-[aryl-carrier protein] + adenosine 3',5'-bisphosphate + H(+). It carries out the reaction apo-[peptidyl-carrier protein] + CoA = holo-[peptidyl-carrier protein] + adenosine 3',5'-bisphosphate + H(+). The protein operates within siderophore biosynthesis; enterobactin biosynthesis. Its function is as follows. Involved in the biosynthesis of the siderophore enterobactin (enterochelin), which is a macrocyclic trimeric lactone of N-(2,3-dihydroxybenzoyl)-serine. The serine trilactone serves as a scaffolding for the three catechol functionalities that provide hexadentate coordination for the tightly ligated iron(2+) atoms. Plays an essential role in the assembly of the enterobactin by catalyzing the transfer of the 4'-phosphopantetheine (Ppant) moiety from coenzyme A to the apo-domains of both EntB (ArCP domain) and EntF (PCP domain) to yield their holo-forms which make them competent for the activation of 2,3-dihydroxybenzoate (DHB) and L-serine, respectively. The protein is Enterobactin synthase component D of Escherichia coli (strain K12).